A 128-amino-acid chain; its full sequence is Small ribosomal subunit protein eS8 (128 aa).

This sequence belongs to the eukaryotic ribosomal protein eS8 family. As to quaternary structure, part of the 30S ribosomal subunit.

In Methanococcus maripaludis (strain C5 / ATCC BAA-1333), this protein is Small ribosomal subunit protein eS8.